We begin with the raw amino-acid sequence, 724 residues long: Outer spore wall protein 2 (724 aa).

2 disordered regions span residues 407–427 and 477–497; these read NSGQ…KNRV and TSGG…YDDK.

The protein resides in the cytoplasm. The protein localises to the prospore membrane. Functionally, may be involved in a late step of spore wall assembly. This is Outer spore wall protein 2 (OSW2) from Saccharomyces cerevisiae (strain ATCC 204508 / S288c) (Baker's yeast).